A 304-amino-acid polypeptide reads, in one-letter code: ADP-ribosyl cyclase/cyclic ADP-ribose hydrolase 1 (304 aa).

Residues 1 to 21 are Cytoplasmic-facing; that stretch reads MANYEFSQVSGDRPGCRLSRK. Residues 22-44 traverse the membrane as a helical; Signal-anchor for type II membrane protein segment; it reads AQIGLGVGLLVLIALVVGIVVIL. Topologically, residues 45–304 are extracellular; sequence LRPRSLLVWT…PEHPSCRLNT (260 aa). Intrachain disulfides connect cysteine 70-cysteine 86, cysteine 103-cysteine 184, and cysteine 164-cysteine 177. Asparagine 104 carries N-linked (GlcNAc...) asparagine glycosylation. Cysteine 123 is an active-site residue. An N-linked (GlcNAc...) asparagine glycan is attached at asparagine 124. Cysteine 205 is a catalytic residue. 2 N-linked (GlcNAc...) asparagine glycosylation sites follow: asparagine 213 and asparagine 223. Cystine bridges form between cysteine 258-cysteine 279 and cysteine 291-cysteine 300.

This sequence belongs to the ADP-ribosyl cyclase family. Homodimer.

It localises to the membrane. It carries out the reaction NAD(+) = cyclic ADP-beta-D-ribose + nicotinamide + H(+). The enzyme catalyses nicotinate + NADP(+) = nicotinate-adenine dinucleotide phosphate + nicotinamide. The catalysed reaction is NAD(+) + H2O = ADP-D-ribose + nicotinamide + H(+). Synthesizes the second messengers cyclic ADP-ribose (cADPR) and nicotinate-adenine dinucleotide phosphate (NAADP), the former a second messenger for glucose-induced insulin secretion, the latter a Ca(2+) mobilizer. Also has cADPR hydrolase activity. This Mus musculus (Mouse) protein is ADP-ribosyl cyclase/cyclic ADP-ribose hydrolase 1 (Cd38).